The following is a 118-amino-acid chain: Small ribosomal subunit protein uS13 (118 aa).

A disordered region spans residues 94-118 (GLPVRGQRTKTNARTRKGPRKPIRK).

It belongs to the universal ribosomal protein uS13 family. Part of the 30S ribosomal subunit. Forms a loose heterodimer with protein S19. Forms two bridges to the 50S subunit in the 70S ribosome.

Located at the top of the head of the 30S subunit, it contacts several helices of the 16S rRNA. In the 70S ribosome it contacts the 23S rRNA (bridge B1a) and protein L5 of the 50S subunit (bridge B1b), connecting the 2 subunits; these bridges are implicated in subunit movement. Contacts the tRNAs in the A and P-sites. This Pseudomonas aeruginosa (strain LESB58) protein is Small ribosomal subunit protein uS13.